Reading from the N-terminus, the 194-residue chain is Heme transporter hrg-1 (194 aa).

A run of 4 helical transmembrane segments spans residues 45–65, 71–91, 113–133, and 143–163; these read QIWI…VFAI, IAVT…HLHL, GATV…VAGI, and LMGA…KWSA. Positions 182-183 match the Di-leucine motif motif; sequence LL.

Belongs to the HRG family. In terms of tissue distribution, specifically expressed in the intestinal cells in larvae and adults.

It is found in the endosome membrane. It localises to the lysosome membrane. Its function is as follows. Heme transporter that regulates intracellular heme availability through the endosomal or lysosomal compartment. This is Heme transporter hrg-1 (hrg-1) from Caenorhabditis elegans.